The following is a 97-amino-acid chain: Citrate lyase acyl carrier protein (97 aa).

S14 is modified (O-(phosphoribosyl dephospho-coenzyme A)serine).

It belongs to the CitD family. Oligomer with a subunit composition of (alpha,beta,gamma)6.

The protein localises to the cytoplasm. Covalent carrier of the coenzyme of citrate lyase. In Klebsiella pneumoniae subsp. pneumoniae (strain ATCC 700721 / MGH 78578), this protein is Citrate lyase acyl carrier protein.